The following is a 578-amino-acid chain: Raftlin (578 aa).

The N-myristoyl glycine moiety is linked to residue Gly2. Cys3 carries the S-palmitoyl cysteine lipid modification. The span at 169-184 shows a compositional bias: polar residues; it reads VNSAGSSAPVSTANST. Disordered regions lie at residues 169–271, 449–525, and 551–578; these read VNSA…VHEE, FSRE…PGGL, and CTGHSNPGEDARDGDAEEVRELGTVEEN. A phosphoserine mark is found at Ser183, Ser199, and Ser220. The segment covering 185–206 has biased composition (basic and acidic residues); that stretch reads EDARDAKNARGDHASLENEKPG. The segment covering 457–466 has biased composition (basic residues); it reads RQMRKSKGKL. A compositionally biased stretch (basic and acidic residues) spans 467–485; it reads SARDKQQAEENEKNLEDQS. Phosphoserine is present on Ser505. Basic and acidic residues-rich tracts occupy residues 506–518 and 557–578; these read EEMKGPVQEDKGE and PGEDARDGDAEEVRELGTVEEN.

The protein belongs to the raftlin family. Interacts with TLR4; the interaction occurs in response to lipopolysaccharide stimulation. Interacts with CLTC; the interaction occurs in response to pathogens. Interacts with AP2A1 and AP2B1. In terms of tissue distribution, expressed in B-cells (at protein level). Expressed in dendritic cells and macrophages.

It is found in the cell membrane. Its subcellular location is the cytoplasm. It localises to the membrane raft. The protein localises to the endosome. The protein resides in the early endosome. Its function is as follows. Involved in protein trafficking via association with clathrin and AP2 complex. Upon bacterial lipopolysaccharide stimulation, mediates internalization of TLR4 to endosomes in dendritic cells and macrophages; and internalization of poly(I:C) to TLR3-positive endosomes in myeloid dendritic cells and epithelial cells; resulting in activation of TICAM1-mediated signaling and subsequent IFNB1 production. Involved in T-cell antigen receptor-mediated signaling by regulating tyrosine kinase LCK localization, T-cell dependent antibody production and cytokine secretion. May regulate B-cell antigen receptor-mediated signaling. May play a pivotal role in the formation and/or maintenance of lipid rafts. This chain is Raftlin (RFTN1), found in Homo sapiens (Human).